A 341-amino-acid chain; its full sequence is Holliday junction branch migration complex subunit RuvB (341 aa).

Positions 1 to 182 (MTSSDPTLRP…FGIPTRLQFY (182 aa)) are large ATPase domain (RuvB-L). Residues Leu21, Arg22, Gly63, Lys66, Thr67, Thr68, 129–131 (EDF), Arg172, Tyr182, and Arg219 contribute to the ATP site. Thr67 is a Mg(2+) binding site. Residues 183 to 253 (TEDELDLIVA…IADRALTRLG (71 aa)) are small ATPAse domain (RuvB-S). The segment at 256–341 (HLGLDLGDRR…KGPGQSDLFG (86 aa)) is head domain (RuvB-H). Arg292, Arg311, and Arg316 together coordinate DNA.

Belongs to the RuvB family. As to quaternary structure, homohexamer. Forms an RuvA(8)-RuvB(12)-Holliday junction (HJ) complex. HJ DNA is sandwiched between 2 RuvA tetramers; dsDNA enters through RuvA and exits via RuvB. An RuvB hexamer assembles on each DNA strand where it exits the tetramer. Each RuvB hexamer is contacted by two RuvA subunits (via domain III) on 2 adjacent RuvB subunits; this complex drives branch migration. In the full resolvosome a probable DNA-RuvA(4)-RuvB(12)-RuvC(2) complex forms which resolves the HJ.

It localises to the cytoplasm. The catalysed reaction is ATP + H2O = ADP + phosphate + H(+). Its function is as follows. The RuvA-RuvB-RuvC complex processes Holliday junction (HJ) DNA during genetic recombination and DNA repair, while the RuvA-RuvB complex plays an important role in the rescue of blocked DNA replication forks via replication fork reversal (RFR). RuvA specifically binds to HJ cruciform DNA, conferring on it an open structure. The RuvB hexamer acts as an ATP-dependent pump, pulling dsDNA into and through the RuvAB complex. RuvB forms 2 homohexamers on either side of HJ DNA bound by 1 or 2 RuvA tetramers; 4 subunits per hexamer contact DNA at a time. Coordinated motions by a converter formed by DNA-disengaged RuvB subunits stimulates ATP hydrolysis and nucleotide exchange. Immobilization of the converter enables RuvB to convert the ATP-contained energy into a lever motion, pulling 2 nucleotides of DNA out of the RuvA tetramer per ATP hydrolyzed, thus driving DNA branch migration. The RuvB motors rotate together with the DNA substrate, which together with the progressing nucleotide cycle form the mechanistic basis for DNA recombination by continuous HJ branch migration. Branch migration allows RuvC to scan DNA until it finds its consensus sequence, where it cleaves and resolves cruciform DNA. The sequence is that of Holliday junction branch migration complex subunit RuvB from Cereibacter sphaeroides (strain ATCC 17029 / ATH 2.4.9) (Rhodobacter sphaeroides).